The sequence spans 359 residues: Mannose-1-phosphate guanylyltransferase (359 aa).

It belongs to the transferase hexapeptide repeat family.

The enzyme catalyses alpha-D-mannose 1-phosphate + GTP + H(+) = GDP-alpha-D-mannose + diphosphate. It functions in the pathway cell wall biogenesis. The protein operates within nucleotide-sugar biosynthesis; GDP-alpha-D-mannose biosynthesis; GDP-alpha-D-mannose from alpha-D-mannose 1-phosphate (GTP route): step 1/1. Its function is as follows. Catalyzes the formation of GDP-mannose from D-mannose-1-phosphate and GTP. Plays an important role in the synthesis of different glycoconjugates which are responsible for cell wall structure, virulence and immunomodulatory activity of M.tuberculosis. This chain is Mannose-1-phosphate guanylyltransferase, found in Mycobacterium tuberculosis (strain ATCC 25618 / H37Rv).